A 742-amino-acid polypeptide reads, in one-letter code: Alcohol dehydrogenase (quinone), dehydrogenase subunit (742 aa).

An N-terminal signal peptide occupies residues 1 to 35 (MTRPASAKRRSLLGILAAGTICAAALPYAAVPARA). Glu-96 is a pyrroloquinoline quinone binding site. Residues Cys-142 and Cys-143 are joined by a disulfide bond. Arg-148 provides a ligand contact to pyrroloquinoline quinone. Residue Glu-216 participates in Ca(2+) binding. Residue Thr-278 participates in pyrroloquinoline quinone binding. Residues Asn-298 and Asp-343 each contribute to the Ca(2+) site. Asp-343 serves as the catalytic Proton acceptor. Residues Lys-370 and Ile-584 each contribute to the pyrroloquinoline quinone site. The region spanning 636–715 (KVVDNGYFQY…AIRQYLIKRA (80 aa)) is the Cytochrome c domain. Positions 649, 652, 653, and 692 each coordinate heme c. A compositionally biased stretch (basic and acidic residues) spans 722–732 (EVDARKNDKNI). The segment at 722–742 (EVDARKNDKNIPENPTLGINP) is disordered.

It belongs to the bacterial PQQ dehydrogenase family. In terms of assembly, the alcohol dehydrogenase multicomponent enzyme system is composed of a dehydrogenase subunit I (AdhA) and a cytochrome c subunit II (AdhB). Requires pyrroloquinoline quinone as cofactor. The cofactor is Ca(2+). Heme c is required as a cofactor.

It localises to the cell membrane. It carries out the reaction ethanol + a ubiquinone = a ubiquinol + acetaldehyde. In terms of biological role, dehydrogenase component of the alcohol dehydrogenase multicomponent enzyme system which is involved in the production of acetic acid and in the ethanol oxidase respiratory chain. Quinohemoprotein alcohol dehydrogenase (ADH) catalyzes the oxidation of ethanol to acetaldehyde by transferring electrons to the ubiquinone embedded in the membrane phospholipids. The electrons transfer from ethanol to membranous ubiquinone occurs from pyrroloquinoline quinone (PQQ) to one heme c in subunit I (AdhA), and finally to two heme c in subunit II (AdhB). Besides ubiquinone reduction, ADH also has a ubiquinol (QH2) oxidation reaction which mediates electron transfer from ubiquinol to the non-energy generating bypass oxidase system. The electrons transfer occurs from ubiquinol (QH2) to the additional heme c within subunit II (AdhB). This is Alcohol dehydrogenase (quinone), dehydrogenase subunit from Acetobacter aceti.